The sequence spans 65 residues: Alpha-toxin Bot11 (65 aa).

The 63-residue stretch at 2–64 folds into the LCN-type CS-alpha/beta domain; the sequence is KDGYIVDDRN…VRTVQAGRCR (63 aa). Cystine bridges form between Cys12-Cys63, Cys16-Cys36, Cys22-Cys46, and Cys26-Cys48.

This sequence belongs to the long (4 C-C) scorpion toxin superfamily. Sodium channel inhibitor family. Alpha subfamily. As to expression, expressed by the venom gland.

It is found in the secreted. Alpha toxins bind voltage-independently at site-3 of sodium channels (Nav) and inhibit the inactivation of the activated channels, thereby blocking neuronal transmission. This chain is Alpha-toxin Bot11, found in Buthus occitanus tunetanus (Common European scorpion).